The primary structure comprises 151 residues: Probable cGMP 3',5'-cyclic phosphodiesterase subunit delta (151 aa).

The protein belongs to the PDE6D/unc-119 family. Interacts with Pde6.

Its subcellular location is the nucleus. The protein resides in the cytoplasm. In Drosophila sechellia (Fruit fly), this protein is Probable cGMP 3',5'-cyclic phosphodiesterase subunit delta.